We begin with the raw amino-acid sequence, 310 residues long: Regulator of microtubule dynamics protein 1 (310 aa).

Lys165 bears the N6-succinyllysine mark. TPR repeat units lie at residues Ala168–Asp204 and Pro222–Phe258.

It belongs to the RMDN family. In terms of assembly, interacts with microtubules.

It is found in the cytoplasm. The protein localises to the cytoskeleton. It localises to the spindle. Its subcellular location is the spindle pole. The protein is Regulator of microtubule dynamics protein 1 (Rmdn1) of Rattus norvegicus (Rat).